The chain runs to 265 residues: Glutamate racemase (265 aa).

Substrate is bound by residues 12-13 (DS) and 44-45 (YG). The Proton donor/acceptor role is filled by C75. 76–77 (NT) contributes to the substrate binding site. C186 functions as the Proton donor/acceptor in the catalytic mechanism. 187–188 (TH) lines the substrate pocket.

This sequence belongs to the aspartate/glutamate racemases family.

The catalysed reaction is L-glutamate = D-glutamate. It functions in the pathway cell wall biogenesis; peptidoglycan biosynthesis. Provides the (R)-glutamate required for cell wall biosynthesis. In Pseudomonas entomophila (strain L48), this protein is Glutamate racemase.